Consider the following 186-residue polypeptide: ATP synthase subunit delta (186 aa).

The protein belongs to the ATPase delta chain family. In terms of assembly, F-type ATPases have 2 components, F(1) - the catalytic core - and F(0) - the membrane proton channel. F(1) has five subunits: alpha(3), beta(3), gamma(1), delta(1), epsilon(1). F(0) has three main subunits: a(1), b(2) and c(10-14). The alpha and beta chains form an alternating ring which encloses part of the gamma chain. F(1) is attached to F(0) by a central stalk formed by the gamma and epsilon chains, while a peripheral stalk is formed by the delta and b chains.

It is found in the cellular chromatophore membrane. Its function is as follows. F(1)F(0) ATP synthase produces ATP from ADP in the presence of a proton or sodium gradient. F-type ATPases consist of two structural domains, F(1) containing the extramembraneous catalytic core and F(0) containing the membrane proton channel, linked together by a central stalk and a peripheral stalk. During catalysis, ATP synthesis in the catalytic domain of F(1) is coupled via a rotary mechanism of the central stalk subunits to proton translocation. This protein is part of the stalk that links CF(0) to CF(1). It either transmits conformational changes from CF(0) to CF(1) or is implicated in proton conduction. This chain is ATP synthase subunit delta, found in Rhodobacter capsulatus (Rhodopseudomonas capsulata).